Consider the following 224-residue polypeptide: UPF0111 protein CPn_0681/CP_0066/CPj0681/CpB0708 (224 aa).

It belongs to the UPF0111 family.

This chain is UPF0111 protein CPn_0681/CP_0066/CPj0681/CpB0708, found in Chlamydia pneumoniae (Chlamydophila pneumoniae).